Consider the following 388-residue polypeptide: Succinate--CoA ligase [ADP-forming] subunit beta (388 aa).

Residues 9–244 form the ATP-grasp domain; the sequence is KQLFADYGLP…PSQEDPREAH (236 aa). Residues lysine 46, 53–55, glutamate 99, threonine 102, and glutamate 107 contribute to the ATP site; that span reads GRG. Mg(2+) contacts are provided by asparagine 199 and aspartate 213. Substrate contacts are provided by residues asparagine 264 and 321–323; that span reads GIV.

The protein belongs to the succinate/malate CoA ligase beta subunit family. Heterotetramer of two alpha and two beta subunits. Mg(2+) serves as cofactor.

The enzyme catalyses succinate + ATP + CoA = succinyl-CoA + ADP + phosphate. It catalyses the reaction GTP + succinate + CoA = succinyl-CoA + GDP + phosphate. It participates in carbohydrate metabolism; tricarboxylic acid cycle; succinate from succinyl-CoA (ligase route): step 1/1. In terms of biological role, succinyl-CoA synthetase functions in the citric acid cycle (TCA), coupling the hydrolysis of succinyl-CoA to the synthesis of either ATP or GTP and thus represents the only step of substrate-level phosphorylation in the TCA. The beta subunit provides nucleotide specificity of the enzyme and binds the substrate succinate, while the binding sites for coenzyme A and phosphate are found in the alpha subunit. This is Succinate--CoA ligase [ADP-forming] subunit beta from Hahella chejuensis (strain KCTC 2396).